The sequence spans 335 residues: MSWFTPEVIDVILTVLRAIVVLLAVVVCGALLSFVERRLLGWWQDRYGPNRVGPFGMFQIAADMLKMFFKEDWNPPFVDRVIFTLAPVVAMSALLIAFVVIPITPTWGVADLNIGLLFFFAMAGLSVYAVLFAGWSSNNKYALLGSLRASAQTVSYEVFLGLALMGVVVQVGSFNMRDIVEYQAQNLWFIIPQFFGFCTFFIAGVAVTHRHPFDQPEAEQELADGYHIEYAGMKWGMFFVGEYIGIILISALLVTLFFGGWHGPFGILPQLSFLWFALKTAFFIMLFILLRASIPRPRYDQVMDFSWKFCLPLTLINLLVTAAIVLYNTPAVAAQ.

The next 8 membrane-spanning stretches (helical) occupy residues 11 to 31 (VILT…CGAL), 81 to 101 (VIFT…FVVI), 114 to 134 (IGLL…LFAG), 154 to 174 (VSYE…VGSF), 187 to 207 (LWFI…GVAV), 238 to 258 (FFVG…TLFF), 270 to 290 (QLSF…FILL), and 307 to 327 (WKFC…IVLY).

The protein belongs to the complex I subunit 1 family. NDH-1 is composed of 13 different subunits. Subunits NuoA, H, J, K, L, M, N constitute the membrane sector of the complex.

The protein resides in the cell inner membrane. The catalysed reaction is a quinone + NADH + 5 H(+)(in) = a quinol + NAD(+) + 4 H(+)(out). Functionally, NDH-1 shuttles electrons from NADH, via FMN and iron-sulfur (Fe-S) centers, to quinones in the respiratory chain. The immediate electron acceptor for the enzyme in this species is believed to be ubiquinone. Couples the redox reaction to proton translocation (for every two electrons transferred, four hydrogen ions are translocated across the cytoplasmic membrane), and thus conserves the redox energy in a proton gradient. This subunit may bind ubiquinone. The polypeptide is NADH-quinone oxidoreductase subunit H (Pseudomonas putida (strain ATCC 700007 / DSM 6899 / JCM 31910 / BCRC 17059 / LMG 24140 / F1)).